A 398-amino-acid chain; its full sequence is Stomatin-like protein 1 (398 aa).

A Tyrosine-type lysosomal sorting signal motif is present at residues 6-10 (GYRAL). Position 28 is a phosphoserine (Ser-28). The helical; Signal-anchor for type III membrane protein transmembrane segment at 58 to 78 (LISFLGFLLLLVTFPISGWFA) threads the bilayer. Over 79–398 (LKIVPTYERM…KLEAVLRALK (320 aa)) the chain is Cytoplasmic. One can recognise an SCP2 domain in the interval 287–398 (KQPLAEGLLT…KLEAVLRALK (112 aa)).

Belongs to the band 7/mec-2 family. As to quaternary structure, interacts with STOM; may redistribute STOM from the plasma membrane to late endosomes. Interacts with FBXW7 isoform 3 and CDK2. Ubiquitously expressed at low levels. Expression is highest in brain.

The protein localises to the membrane. It is found in the late endosome membrane. The protein resides in the membrane raft. Its subcellular location is the cell membrane. It localises to the cytoplasmic vesicle. Functionally, may play a role in cholesterol transfer to late endosomes. May play a role in modulating membrane acid-sensing ion channels. Can specifically inhibit proton-gated current of ASIC1 isoform 1. Can increase inactivation speed of ASIC3. May be involved in regulation of proton sensing in dorsal root ganglions. May play a role in protecting FBXW7 isoform 3 from degradation. This chain is Stomatin-like protein 1 (STOML1), found in Homo sapiens (Human).